A 150-amino-acid polypeptide reads, in one-letter code: Protein Turandot X (150 aa).

An N-terminal signal peptide occupies residues 1–22 (MGLHIGSLLICVFLGILPFATA). The segment at 127 to 150 (REEGQSNHANSPTTLPSRIQKMTK) is disordered. A compositionally biased stretch (polar residues) spans 132-150 (SNHANSPTTLPSRIQKMTK).

This sequence belongs to the Turandot family.

It is found in the secreted. Functionally, a humoral factor that may play a role in stress tolerance. The sequence is that of Protein Turandot X from Drosophila simulans (Fruit fly).